The chain runs to 184 residues: GTPase RhebL1 (184 aa).

GTP is bound by residues 16 to 21 (SVGKTS), 32 to 38 (LEGYDPT), Gly-63, 119 to 122 (NKAD), and 149 to 150 (SA). The Effector region motif lies at 35–43 (YDPTVENTY). Thr-38 lines the Mg(2+) pocket. Cys-181 is modified (cysteine methyl ester). Residue Cys-181 is the site of S-farnesyl cysteine attachment. Residues 182–184 (YLM) constitute a propeptide, removed in mature form.

The protein belongs to the small GTPase superfamily. Rheb family. In terms of assembly, interacts with MTOR.

The protein localises to the endomembrane system. It is found in the cytoplasm. It carries out the reaction GTP + H2O = GDP + phosphate + H(+). In terms of biological role, binds GTP and exhibits intrinsic GTPase activity. May activate NF-kappa-B-mediated gene transcription. Promotes signal transduction through MTOR, activates RPS6KB1, and is a downstream target of the small GTPase-activating proteins TSC1 and TSC2. This Mus musculus (Mouse) protein is GTPase RhebL1 (Rhebl1).